A 72-amino-acid chain; its full sequence is Exodeoxyribonuclease 7 small subunit (72 aa).

This sequence belongs to the XseB family. Heterooligomer composed of large and small subunits.

The protein resides in the cytoplasm. The catalysed reaction is Exonucleolytic cleavage in either 5'- to 3'- or 3'- to 5'-direction to yield nucleoside 5'-phosphates.. Bidirectionally degrades single-stranded DNA into large acid-insoluble oligonucleotides, which are then degraded further into small acid-soluble oligonucleotides. In Chlamydia trachomatis serovar A (strain ATCC VR-571B / DSM 19440 / HAR-13), this protein is Exodeoxyribonuclease 7 small subunit.